The following is a 187-amino-acid chain: MDRYAFLSFYKCTHQVGKFVGSDTWSNVLRESWFFNNWKELLVPVSLSTFLLLGLKGYLDEQFCQVEDLQDEASPNFVEEVVTLFFKDSGRLMSNIEQALEKYPRDFNRWDTYMQQLKGSCSSIGASRMKNECMSFRDSCGQGNVEGCMRSFQKVKREHAVLRQKLESYFQLLRQAGPAGAATRPVM.

An HPt domain is found at 74–169 (SPNFVEEVVT…AVLRQKLESY (96 aa)).

In terms of biological role, functions as a two-component phosphorelay mediator between cytokinin sensor histidine kinases and response regulators (B-type ARRs). Plays an important role in propagating cytokinin signal transduction. This Oryza sativa subsp. japonica (Rice) protein is Pseudo histidine-containing phosphotransfer protein 1.